Reading from the N-terminus, the 83-residue chain is Small ribosomal subunit protein uS17 (83 aa).

The protein belongs to the universal ribosomal protein uS17 family. As to quaternary structure, part of the 30S ribosomal subunit.

Its function is as follows. One of the primary rRNA binding proteins, it binds specifically to the 5'-end of 16S ribosomal RNA. The polypeptide is Small ribosomal subunit protein uS17 (Ehrlichia chaffeensis (strain ATCC CRL-10679 / Arkansas)).